The primary structure comprises 924 residues: DNA repair and recombination protein RDH54 (924 aa).

Residues 1 to 10 (MQIPKYENKP) show a composition bias toward basic and acidic residues. 2 disordered regions span residues 1–21 (MQIP…GSNK) and 155–183 (EALS…NDGG). Low complexity predominate over residues 168–178 (TTSTTETVPST). In terms of domain architecture, Helicase ATP-binding spans 299 to 487 (LENDSDISGC…FTIIDFINPG (189 aa)). An ATP-binding site is contributed by 346 to 353 (IPLTGLCK). The short motif at 472–475 (NDLN) is the DEGH box element. A Glycyl lysine isopeptide (Lys-Gly) (interchain with G-Cter in ubiquitin) cross-link involves residue Lys615. Residues 631 to 790 (KLKVLMTLLE…DSEMRNKESS (160 aa)) form the Helicase C-terminal domain.

This sequence belongs to the SNF2/RAD54 helicase family. As to quaternary structure, interacts with RAD51 and DMC1.

Its subcellular location is the nucleus. It carries out the reaction ATP + H2O = ADP + phosphate + H(+). Its function is as follows. Involved in the recombinational repair of double-strand breaks (DSB) in DNA during mitosis and meiosis. Has DNA dependent ATPase activity. Promotes D-loop (displacement loop) formation with RAD51 recombinase. Modifies the topology of double-stranded DNA during the D-loop reaction to facilitate the invasion of the homologous duplex molecule by the initiating single-stranded DNA substrate. Required for adaptation from G2/M checkpoint arrest induced by a double strand break, by participating in monitoring the extent of single-stranded DNA produced by resection of DNA ends. This role is distinct from its roles in recombination. Promotes colocalization of RAD51 and DMC1 during meiotic recombination. Involved in crossover interference. This chain is DNA repair and recombination protein RDH54 (RDH54), found in Saccharomyces cerevisiae (strain JAY291) (Baker's yeast).